The primary structure comprises 160 residues: SsrA-binding protein (160 aa).

Belongs to the SmpB family.

It is found in the cytoplasm. Its function is as follows. Required for rescue of stalled ribosomes mediated by trans-translation. Binds to transfer-messenger RNA (tmRNA), required for stable association of tmRNA with ribosomes. tmRNA and SmpB together mimic tRNA shape, replacing the anticodon stem-loop with SmpB. tmRNA is encoded by the ssrA gene; the 2 termini fold to resemble tRNA(Ala) and it encodes a 'tag peptide', a short internal open reading frame. During trans-translation Ala-aminoacylated tmRNA acts like a tRNA, entering the A-site of stalled ribosomes, displacing the stalled mRNA. The ribosome then switches to translate the ORF on the tmRNA; the nascent peptide is terminated with the 'tag peptide' encoded by the tmRNA and targeted for degradation. The ribosome is freed to recommence translation, which seems to be the essential function of trans-translation. In Actinobacillus succinogenes (strain ATCC 55618 / DSM 22257 / CCUG 43843 / 130Z), this protein is SsrA-binding protein.